Here is a 460-residue protein sequence, read N- to C-terminus: GTPase Der (460 aa).

2 consecutive EngA-type G domains span residues 2 to 164 (QSII…HEEF) and 196 to 368 (IRVG…ENFT). GTP contacts are provided by residues 8 to 15 (GKPNVGKS), 55 to 59 (DSGGL), 116 to 119 (NKVD), 202 to 209 (GRVNVGKS), 249 to 253 (DTAGI), and 313 to 316 (NKWD). Residues 369-453 (QKIQTSKLNT…PLVIASRKKG (85 aa)) enclose the KH-like domain.

It belongs to the TRAFAC class TrmE-Era-EngA-EngB-Septin-like GTPase superfamily. EngA (Der) GTPase family. As to quaternary structure, associates with the 50S ribosomal subunit.

GTPase that plays an essential role in the late steps of ribosome biogenesis. The protein is GTPase Der of Campylobacter jejuni subsp. jejuni serotype O:23/36 (strain 81-176).